Here is a 451-residue protein sequence, read N- to C-terminus: Tubulin alpha-3 chain (451 aa).

Gln-11 is a binding site for GTP. Lys-40 is modified (N6-acetyllysine). GTP is bound by residues Glu-71, Ser-140, Gly-144, Thr-145, Thr-179, Asn-206, and Asn-228. Glu-71 provides a ligand contact to Mg(2+). Glu-254 is a catalytic residue.

Belongs to the tubulin family. Dimer of alpha and beta chains. A typical microtubule is a hollow water-filled tube with an outer diameter of 25 nm and an inner diameter of 15 nM. Alpha-beta heterodimers associate head-to-tail to form protofilaments running lengthwise along the microtubule wall with the beta-tubulin subunit facing the microtubule plus end conferring a structural polarity. Microtubules usually have 13 protofilaments but different protofilament numbers can be found in some organisms and specialized cells. It depends on Mg(2+) as a cofactor. Post-translationally, undergoes a tyrosination/detyrosination cycle, the cyclic removal and re-addition of a C-terminal tyrosine residue by the enzymes tubulin tyrosine carboxypeptidase (TTCP) and tubulin tyrosine ligase (TTL), respectively. Acetylation of alpha chains at Lys-40 stabilizes microtubules and affects affinity and processivity of microtubule motors. This modification has a role in multiple cellular functions, ranging from cell motility, cell cycle progression or cell differentiation to intracellular trafficking and signaling.

Its subcellular location is the cytoplasm. The protein resides in the cytoskeleton. It carries out the reaction GTP + H2O = GDP + phosphate + H(+). Functionally, tubulin is the major constituent of microtubules, a cylinder consisting of laterally associated linear protofilaments composed of alpha- and beta-tubulin heterodimers. Microtubules grow by the addition of GTP-tubulin dimers to the microtubule end, where a stabilizing cap forms. Below the cap, tubulin dimers are in GDP-bound state, owing to GTPase activity of alpha-tubulin. This Homarus americanus (American lobster) protein is Tubulin alpha-3 chain.